The sequence spans 911 residues: Protein dead ringer (911 aa).

3 disordered regions span residues 1 to 44 (MQLR…DCDS), 67 to 87 (SGGGGSFASPEPQTELPLSHH), and 172 to 274 (HVTS…QNNG). The segment covering 19–34 (IERDSDLGDDLSHGDR) has biased composition (basic and acidic residues). Phosphoserine is present on serine 30. Threonine 35 bears the Phosphothreonine mark. Position 44 is a phosphoserine (serine 44). Low complexity predominate over residues 174–201 (TSSPSGGNGSSYNGGTTPTNSSNSNATT). Residues 202–231 (NGGGTAGPGGTGGSGGGGGGGGGGGGGVGG) are compositionally biased toward gly residues. The segment covering 252-273 (AANSASNSSTSSEASNSSQQNN) has biased composition (low complexity). One can recognise an ARID domain in the interval 293–385 (DPKRKEFLDD…YLYPYECEKK (93 aa)). Disordered regions lie at residues 501 to 633 (GMPP…VGSG), 662 to 775 (PSMG…GKLN), and 826 to 877 (QSET…DQDM). The span at 512–550 (HQQQHSQQQQQQQHHHQQQQQQQSQQQHHLQQQRQRSQS) shows a compositional bias: low complexity. The segment covering 570 to 600 (HNNNSPPGSAHTSPQQREALNLSDSPPNLTN) has biased composition (polar residues). A phosphoserine mark is found at serine 592 and serine 594. Residues 601–621 (IKREREREPTPEPVDQDDKFV) show a composition bias toward basic and acidic residues. The residue at position 720 (serine 720) is a Phosphoserine. The 95-residue stretch at 731–825 (TTGGSVGHRH…GVLVANVPLS (95 aa)) folds into the REKLES domain. Basic residues predominate over residues 737 to 751 (GHRHSSPVSTKKKGG). The segment covering 841–853 (TVEEEKDEEEEEE) has biased composition (acidic residues). Residues 854–870 (PKAAEEESHRSPVKQEN) show a composition bias toward basic and acidic residues.

In terms of tissue distribution, present in the pharyngeal muscles, hindgut epithelium, amnioserosa, ring gland, midgut-hindgut junction, posterior region of each brain lobe, longitudinal glial cells of the CNS and the salivary gland duct of germ-band retracted embryos.

It is found in the nucleus. In terms of biological role, transcription factor which is a downstream target of gcm and repo. Directly or indirectly activates the transcription of locos and pros, which are essential for the development of some glial cells. Plays an essential role in defining the cell shape and migration characteristics of longitudinal glia that enable them to establish a normal axon scaffold. This is Protein dead ringer (retn) from Drosophila melanogaster (Fruit fly).